We begin with the raw amino-acid sequence, 599 residues long: MKNIRNFSIIAHIDHGKSTLSDRLIQTCGGLSDREMEAQVLDSMDLERERGITIKAQSVTLNYKAKNGETYQLNFIDTPGHVDFSYEVSRSLAACEGALLVVDAGQGVEAQTLANCYTAIEMNLEVVPILNKIDLPAADPERVAEEIEDIVGIDAMEAVRCSAKTGVGIEDVLEEIVAKIPAPKGDPNAPLQALIIDSWFDNYLGVVSLVRVKNGVLRKGDKIKVMSTGQTYNVDRLGIFTPKQVDKNELECGEVGWVVCAIKDILGAPVGDTLTSQHNPASSVLPGFKKVKPQVYAGLFPVSSDDYEAFRDALGKLSLNDASLFYEPETSTALGFGFRCGFLGLLHMEIIQERLEREYDLDLITTAPTVVYEVELTNGDVIYVDSPSKLPPLNNISEIREPIAECNMLVPQEYLGNVITLCVEKRGVQTNMVYHGNQIALTYEIPMGEVVLDFFDRLKSTSRGYASLDYSFKRFQAADMVRVDIMINGERVDALALIVHKDNAPYRGRELVEKMKELIPRQQFDIAIQAAIGNHIIARSTVKQLRKNVLAKCYGGDVSRKKKLLQKQKEGKKRMKQLGNVEVPQEAFLAILHVGKDSK.

In terms of domain architecture, tr-type G spans 2 to 184 (KNIRNFSIIA…EIVAKIPAPK (183 aa)). GTP contacts are provided by residues 14–19 (DHGKST) and 131–134 (NKID).

This sequence belongs to the TRAFAC class translation factor GTPase superfamily. Classic translation factor GTPase family. LepA subfamily.

Its subcellular location is the cell inner membrane. It carries out the reaction GTP + H2O = GDP + phosphate + H(+). In terms of biological role, required for accurate and efficient protein synthesis under certain stress conditions. May act as a fidelity factor of the translation reaction, by catalyzing a one-codon backward translocation of tRNAs on improperly translocated ribosomes. Back-translocation proceeds from a post-translocation (POST) complex to a pre-translocation (PRE) complex, thus giving elongation factor G a second chance to translocate the tRNAs correctly. Binds to ribosomes in a GTP-dependent manner. This chain is Elongation factor 4, found in Mannheimia succiniciproducens (strain KCTC 0769BP / MBEL55E).